The following is a 37-amino-acid chain: Large ribosomal subunit protein bL36 (37 aa).

It belongs to the bacterial ribosomal protein bL36 family.

The polypeptide is Large ribosomal subunit protein bL36 (Staphylococcus aureus (strain Mu3 / ATCC 700698)).